A 25-amino-acid chain; its full sequence is GLWSKIKEAAKTAGLMAMGFVNDMV.

It belongs to the frog skin active peptide (FSAP) family. Dermaseptin subfamily. Expressed by the skin glands.

It is found in the secreted. Its function is as follows. Antibacterial peptide with activity against Gram-positive bacteria S.aureus and E.faecalis, and Gram-negative bacteria P.aeruginosa and E.coli. The chain is Dermaseptin-DI5 from Phyllomedusa distincta (Monkey frog).